A 501-amino-acid chain; its full sequence is Solute carrier family 2, facilitated glucose transporter member 5 (501 aa).

Methionine 1 carries the post-translational modification N-acetylmethionine. Topologically, residues 1–18 are cytoplasmic; it reads MEPQDPVKREGRLTPVIV. Residues 19–39 form a helical membrane-spanning segment; it reads LATLIAAFGSSFQYGYNVAAI. Tyrosine 32 is a binding site for D-fructose. The Extracellular segment spans residues 40–68; it reads NSPSEFMKDFYNYTYYDRVGEYMNEFYLT. Asparagine 51 carries an N-linked (GlcNAc...) asparagine glycan. A helical membrane pass occupies residues 69–91; the sequence is LLWSVTVSMFPFGGFLGSLMVGP. Over 92 to 98 the chain is Cytoplasmic; that stretch reads LVNNLGR. A helical membrane pass occupies residues 99–119; it reads KGTLLFNNIFSIVPALLMGFS. Residues 120–126 are Extracellular-facing; sequence ELAKSFE. A helical membrane pass occupies residues 127–149; it reads MIIVARVLVGICAGLSSNVVPMY. At 150-161 the chain is on the cytoplasmic side; that stretch reads LGELAPKNWRGA. A helical transmembrane segment spans residues 162-182; sequence LGVVPQLFITIGILVAQIFGL. Glutamine 167 contributes to the D-fructose binding site. Topologically, residues 183 to 192 are extracellular; sequence RSLLANEEGW. The chain crosses the membrane as a helical span at residues 193–213; it reads PILLGLTGIPAVLQLLFLPFF. Topologically, residues 214–277 are cytoplasmic; sequence PESPRYLLIQ…LFKMRSLRWQ (64 aa). Residues 278 to 298 traverse the membrane as a helical segment; that stretch reads VISIIVLMAGQQLSGVNAIYY. Residues glutamine 288 and 296–298 contribute to the D-fructose site; that span reads IYY. Residues 299–313 lie on the Extracellular side of the membrane; sequence YADQIYLSAGVNEDD. The chain crosses the membrane as a helical span at residues 314-334; it reads VQYVTAGTGAVNVLITVCAIF. At 335 to 342 the chain is on the cytoplasmic side; it reads VVELMGRR. Residues 343-363 traverse the membrane as a helical segment; sequence FLLLLGFSVCFTACCVLTGAL. Residues 364-371 lie on the Extracellular side of the membrane; sequence ALQDVISW. Residues 372-394 traverse the membrane as a helical segment; the sequence is MPYVSIACVISYVIGHALGPSPI. Histidine 387 is a binding site for D-fructose. Residues 395 to 412 lie on the Cytoplasmic side of the membrane; sequence PALLVTEIFLQSSRPAAY. A helical transmembrane segment spans residues 413–433; the sequence is MVAGTVHWLSNFTVGLVFPFI. A D-fructose-binding site is contributed by 419 to 420; the sequence is HW. The Extracellular segment spans residues 434–439; the sequence is QVGLGA. Residues 440 to 460 form a helical membrane-spanning segment; that stretch reads YSFVIFAVICLLTTVYIFLII. Over 461 to 501 the chain is Cytoplasmic; sequence PETKSKTFIEINRIFIKMNKVPGVHPEKEELKEFPPSTARQ.

The protein belongs to the major facilitator superfamily. Sugar transporter (TC 2.A.1.1) family. Glucose transporter subfamily.

It localises to the apical cell membrane. The protein localises to the cell membrane. It is found in the sarcolemma. It catalyses the reaction D-fructose(out) = D-fructose(in). Functions as a fructose transporter that has only low activity with other monosaccharides. Can mediate the uptake of deoxyglucose, but with low efficiency. Essential for fructose uptake in the small intestine. Plays a role in the regulation of salt uptake and blood pressure in response to dietary fructose. Required for the development of high blood pressure in response to high dietary fructose intake. The protein is Solute carrier family 2, facilitated glucose transporter member 5 of Bos taurus (Bovine).